The chain runs to 366 residues: Alcohol dehydrogenase (366 aa).

Zn(2+) contacts are provided by cysteine 41, histidine 62, glutamate 63, and aspartate 167.

Belongs to the zinc-containing alcohol dehydrogenase family. In terms of assembly, homotetramer. Zn(2+) serves as cofactor.

It carries out the reaction a primary alcohol + NAD(+) = an aldehyde + NADH + H(+). The enzyme catalyses a secondary alcohol + NAD(+) = a ketone + NADH + H(+). It catalyses the reaction (R,R)-butane-2,3-diol + NAD(+) = (R)-acetoin + NADH + H(+). The catalysed reaction is an aldehyde + NAD(+) + H2O = a carboxylate + NADH + 2 H(+). In terms of biological role, multifunctional alcohol dehydrogenase exhibiting NAD(+)-dependent dehydrogenase activities for 2,3-butanediol, ethanol and acetaldehyde, and reductase activities for acetoin (NADH-dependent), and diacetyl and acetaldehyde (independently of whether NADH or NADPH is the reductant). The rate of oxidation of 2,3-butanediol is much higher than for the oxidation of ethanol. Has acetaldehyde dehydrogenase activity leading to acetate formation. May function in the release of excess reducing power in the absence of exogenous hydrogen acceptors such as oxygen. The polypeptide is Alcohol dehydrogenase (adh) (Cupriavidus necator (strain ATCC 17699 / DSM 428 / KCTC 22496 / NCIMB 10442 / H16 / Stanier 337) (Ralstonia eutropha)).